Here is a 383-residue protein sequence, read N- to C-terminus: Agmatine deiminase (383 aa).

Positions 220 and 226 each coordinate agmatine. The Amidino-cysteine intermediate role is filled by Cys-366.

It belongs to the agmatine deiminase family. As to quaternary structure, forms homodimers.

The catalysed reaction is agmatine + H2O = N-carbamoylputrescine + NH4(+). The protein operates within amine and polyamine biosynthesis; putrescine biosynthesis via agmatine pathway; N-carbamoylputrescine from agmatine: step 1/1. Inhibited by N-ethylmaleimide and iodoacetamide. Its function is as follows. Mediates the hydrolysis of agmatine into N-carbamoylputrescine in the arginine decarboxylase (ADC) pathway of putrescine biosynthesis, a basic polyamine. The chain is Agmatine deiminase (AIH) from Arabidopsis thaliana (Mouse-ear cress).